Here is a 236-residue protein sequence, read N- to C-terminus: 7-cyano-7-deazaguanine synthase (236 aa).

21-31 (LSGGLDSATVL) is a binding site for ATP. 4 residues coordinate Zn(2+): C202, C212, C215, and C218.

Belongs to the QueC family. Zn(2+) is required as a cofactor.

The enzyme catalyses 7-carboxy-7-deazaguanine + NH4(+) + ATP = 7-cyano-7-deazaguanine + ADP + phosphate + H2O + H(+). Its pathway is purine metabolism; 7-cyano-7-deazaguanine biosynthesis. Catalyzes the ATP-dependent conversion of 7-carboxy-7-deazaguanine (CDG) to 7-cyano-7-deazaguanine (preQ(0)). The sequence is that of 7-cyano-7-deazaguanine synthase from Frankia casuarinae (strain DSM 45818 / CECT 9043 / HFP020203 / CcI3).